The following is a 603-amino-acid chain: Elongation factor 4 (603 aa).

The tr-type G domain maps to 7 to 191 (SNIRNFSIVA…AIVTRLPPPK (185 aa)). GTP-binding positions include 19-24 (DHGKST) and 138-141 (NKVD).

This sequence belongs to the TRAFAC class translation factor GTPase superfamily. Classic translation factor GTPase family. LepA subfamily.

Its subcellular location is the cell inner membrane. The enzyme catalyses GTP + H2O = GDP + phosphate + H(+). Its function is as follows. Required for accurate and efficient protein synthesis under certain stress conditions. May act as a fidelity factor of the translation reaction, by catalyzing a one-codon backward translocation of tRNAs on improperly translocated ribosomes. Back-translocation proceeds from a post-translocation (POST) complex to a pre-translocation (PRE) complex, thus giving elongation factor G a second chance to translocate the tRNAs correctly. Binds to ribosomes in a GTP-dependent manner. The protein is Elongation factor 4 of Bradyrhizobium diazoefficiens (strain JCM 10833 / BCRC 13528 / IAM 13628 / NBRC 14792 / USDA 110).